Reading from the N-terminus, the 142-residue chain is Hemoglobin subunit alpha (142 aa).

Ser-1 is modified (N-acetylserine). Residues 1 to 142 (SLSDKDKAAV…VALALAERYR (142 aa)) enclose the Globin domain. His-59 contributes to the O2 binding site. Position 88 (His-88) interacts with heme b.

This sequence belongs to the globin family. As to quaternary structure, heterotetramer of two alpha chains and two beta chains. Red blood cells.

In terms of biological role, involved in oxygen transport from gills to the various peripheral tissues. The chain is Hemoglobin subunit alpha (hba) from Gymnodraco acuticeps (Antarctic dragonfish).